Reading from the N-terminus, the 252-residue chain is Indole-3-glycerol phosphate synthase (252 aa).

Belongs to the TrpC family.

The catalysed reaction is 1-(2-carboxyphenylamino)-1-deoxy-D-ribulose 5-phosphate + H(+) = (1S,2R)-1-C-(indol-3-yl)glycerol 3-phosphate + CO2 + H2O. Its pathway is amino-acid biosynthesis; L-tryptophan biosynthesis; L-tryptophan from chorismate: step 4/5. This chain is Indole-3-glycerol phosphate synthase, found in Leptospira interrogans serogroup Icterohaemorrhagiae serovar copenhageni (strain Fiocruz L1-130).